The sequence spans 877 residues: GPI inositol-deacylase (877 aa).

Residues phenylalanine 35 to phenylalanine 55 form a helical membrane-spanning segment. Serine 206 is an active-site residue. Residues asparagine 291, asparagine 336, asparagine 374, asparagine 448, and asparagine 473 are each glycosylated (N-linked (GlcNAc...) asparagine). The next 8 helical transmembrane spans lie at valine 597–isoleucine 617, methionine 637–phenylalanine 657, proline 674–isoleucine 694, valine 735–tryptophan 755, isoleucine 771–isoleucine 791, asparagine 809–isoleucine 829, valine 834–glycine 854, and tryptophan 857–isoleucine 877.

It belongs to the GPI inositol-deacylase family.

Its subcellular location is the endoplasmic reticulum membrane. Involved in inositol deacylation of GPI-anchored proteins which plays important roles in the quality control and ER-associated degradation of GPI-anchored proteins. In Cryptococcus neoformans var. neoformans serotype D (strain JEC21 / ATCC MYA-565) (Filobasidiella neoformans), this protein is GPI inositol-deacylase (BST1).